Consider the following 189-residue polypeptide: Elongation factor P 2 (189 aa).

Belongs to the elongation factor P family.

The protein resides in the cytoplasm. It participates in protein biosynthesis; polypeptide chain elongation. Involved in peptide bond synthesis. Stimulates efficient translation and peptide-bond synthesis on native or reconstituted 70S ribosomes in vitro. Probably functions indirectly by altering the affinity of the ribosome for aminoacyl-tRNA, thus increasing their reactivity as acceptors for peptidyl transferase. This is Elongation factor P 2 from Lactobacillus acidophilus (strain ATCC 700396 / NCK56 / N2 / NCFM).